Reading from the N-terminus, the 145-residue chain is Transcriptional regulator MraZ (145 aa).

2 SpoVT-AbrB domains span residues 7-54 and 83-126; these read NATN…GPDL and GVFM…QPQA.

The protein belongs to the MraZ family. In terms of assembly, forms oligomers.

The protein resides in the cytoplasm. It is found in the nucleoid. This chain is Transcriptional regulator MraZ, found in Rhizobium leguminosarum bv. trifolii (strain WSM2304).